The sequence spans 230 residues: Ribosomal RNA small subunit methyltransferase G (230 aa).

S-adenosyl-L-methionine is bound by residues Gly74, Phe79, 124-125 (AE), and Arg141.

The protein belongs to the methyltransferase superfamily. RNA methyltransferase RsmG family.

Its subcellular location is the cytoplasm. Functionally, specifically methylates the N7 position of a guanine in 16S rRNA. The sequence is that of Ribosomal RNA small subunit methyltransferase G from Acholeplasma laidlawii (strain PG-8A).